The following is a 330-amino-acid chain: MKKIAVDAMGGDYAPQAIVEGVNQALSDFSDIEVQLYGDEAKIKQYLTATERVSIIHTDEKIDSDDEPTRAIRNKKNASMVLAAKAVKDGEADAVLSAGNTGALLAAGFFIVGRIKNIDRPGLMSTLPTVDGKGFDMLDLGANAENTAQHLHQYAVLGSFYAKNVRGIAQPRVGLLNNGTESSKGDPLRKETYELLAADESLNFIGNVEARDLMNGVADVVVADGFTGNAVLKSIEGTAMGIMGLLKTAITGGGLRAKLGALLLKDSLSGLKKQLNYSDVGGAVLFGVKAPVVKTHGSSDAKAVYSTIRQIRTMLETDVVAQTAREFSGE.

This sequence belongs to the PlsX family. As to quaternary structure, homodimer. Probably interacts with PlsY.

It localises to the cytoplasm. It catalyses the reaction a fatty acyl-[ACP] + phosphate = an acyl phosphate + holo-[ACP]. It participates in lipid metabolism; phospholipid metabolism. Catalyzes the reversible formation of acyl-phosphate (acyl-PO(4)) from acyl-[acyl-carrier-protein] (acyl-ACP). This enzyme utilizes acyl-ACP as fatty acyl donor, but not acyl-CoA. The protein is Phosphate acyltransferase of Streptococcus pneumoniae (strain JJA).